A 713-amino-acid polypeptide reads, in one-letter code: Cyclomaltodextrin glucanotransferase (713 aa).

A signal peptide spans 1 to 27 (MKKQVKWLTSVSMSVGIALGAALPVWA). The segment at 28–165 (SPDTSVNNKL…NIKVVMDFAP (138 aa)) is A1. Aspartate 54, asparagine 56, asparagine 59, asparagine 60, glycine 78, and aspartate 80 together coordinate Ca(2+). 127 to 128 (YW) lines the substrate pocket. Residue asparagine 166 coordinates Ca(2+). A b region spans residues 166–229 (NHTNPASSTD…NLYDLADINQ (64 aa)). Histidine 167 contacts substrate. Isoleucine 217 serves as a coordination point for Ca(2+). Position 220-223 (220-223 (NLYD)) interacts with substrate. Aspartate 226 provides a ligand contact to Ca(2+). Positions 230-434 (NNNTIDSYLK…LRKSNPALAY (205 aa)) are A2. Arginine 254 contacts substrate. Aspartate 256 acts as the Nucleophile in catalysis. 259–260 (KH) provides a ligand contact to substrate. Position 260 (histidine 260) interacts with Ca(2+). Glutamate 285 acts as the Proton donor in catalysis. Residues histidine 355, aspartate 399, and arginine 403 each contribute to the substrate site. Residues 435 to 522 (GSTTQRWVNS…GTAVWQYTTT (88 aa)) form a c region. Residues 523 to 609 (ESSPIIGNVG…SAAFNNFNVL (87 aa)) form a d region. The IPT/TIG domain occupies 526–606 (PIIGNVGPTM…GTTSAAFNNF (81 aa)). In terms of domain architecture, CBM20 spans 608-713 (VLTADQVTVR…VATVTVDWQN (106 aa)). Residues 610–713 (TADQVTVRFK…VATVTVDWQN (104 aa)) form an e region.

Belongs to the glycosyl hydrolase 13 family. As to quaternary structure, monomer. Ca(2+) is required as a cofactor.

Its subcellular location is the secreted. The catalysed reaction is Cyclizes part of a (1-&gt;4)-alpha-D-glucan chain by formation of a (1-&gt;4)-alpha-D-glucosidic bond.. The polypeptide is Cyclomaltodextrin glucanotransferase (Paenibacillus macerans (Bacillus macerans)).